The following is a 382-amino-acid chain: Mannitol-1-phosphate 5-dehydrogenase (382 aa).

3–14 (AVHFGAGNIGRG) provides a ligand contact to NAD(+).

This sequence belongs to the mannitol dehydrogenase family.

It catalyses the reaction D-mannitol 1-phosphate + NAD(+) = beta-D-fructose 6-phosphate + NADH + H(+). The protein is Mannitol-1-phosphate 5-dehydrogenase of Aliivibrio salmonicida (strain LFI1238) (Vibrio salmonicida (strain LFI1238)).